Here is a 1137-residue protein sequence, read N- to C-terminus: Isoleucine--tRNA ligase (1137 aa).

The 'HIGH' region motif lies at 50-60 (PSANGMPGIHH). A 'KMSKS' region motif is present at residues 688–692 (KMSKR). Lys691 provides a ligand contact to ATP.

The protein belongs to the class-I aminoacyl-tRNA synthetase family. IleS type 2 subfamily. Monomer. Zn(2+) is required as a cofactor.

The protein localises to the cytoplasm. The catalysed reaction is tRNA(Ile) + L-isoleucine + ATP = L-isoleucyl-tRNA(Ile) + AMP + diphosphate. In terms of biological role, catalyzes the attachment of isoleucine to tRNA(Ile). As IleRS can inadvertently accommodate and process structurally similar amino acids such as valine, to avoid such errors it has two additional distinct tRNA(Ile)-dependent editing activities. One activity is designated as 'pretransfer' editing and involves the hydrolysis of activated Val-AMP. The other activity is designated 'posttransfer' editing and involves deacylation of mischarged Val-tRNA(Ile). This is Isoleucine--tRNA ligase from Porphyromonas gingivalis (strain ATCC BAA-308 / W83).